Consider the following 334-residue polypeptide: Glyoxylate reductase (334 aa).

NADP(+)-binding positions include 158–161 (FGRI), 180–182 (SRT), and 239–241 (IAR). Residues Arg-241 and Glu-270 contribute to the active site. The Proton donor role is filled by His-288. 288 to 290 (HIG) is an NADP(+) binding site.

The protein belongs to the D-isomer specific 2-hydroxyacid dehydrogenase family. GyaR subfamily. In terms of assembly, homodimer.

Its subcellular location is the cytoplasm. The enzyme catalyses glycolate + NAD(+) = glyoxylate + NADH + H(+). This chain is Glyoxylate reductase, found in Thermococcus gammatolerans (strain DSM 15229 / JCM 11827 / EJ3).